The following is a 148-amino-acid chain: Cytochrome c-type biogenesis protein CcmE (148 aa).

Residues 1–7 (MKPRNRR) lie on the Cytoplasmic side of the membrane. The helical; Signal-anchor for type II membrane protein transmembrane segment at 8-28 (IALIVAGLSALGIATALVLNA) threads the bilayer. The Periplasmic portion of the chain corresponds to 29–148 (FQSNLVFFFT…VQKKPASRKP (120 aa)). Heme is bound by residues histidine 123 and tyrosine 127. A disordered region spans residues 128–148 (MPPEAQHALDEVQKKPASRKP).

The protein belongs to the CcmE/CycJ family.

The protein resides in the cell inner membrane. Heme chaperone required for the biogenesis of c-type cytochromes. Transiently binds heme delivered by CcmC and transfers the heme to apo-cytochromes in a process facilitated by CcmF and CcmH. This is Cytochrome c-type biogenesis protein CcmE from Pseudomonas aeruginosa.